Consider the following 510-residue polypeptide: Archaeosine synthase subunit alpha (510 aa).

In terms of domain architecture, PUA spans 427–510; it reads LGKFTINKAS…LKKGIAVKVR (84 aa).

It belongs to the archaeosine synthase type 1 family. As to quaternary structure, forms a robust complex with the archaeosine synthase beta subunit RaSEA, likely an alpha(2)beta(2) heterotetrameric structure. Formation of this complex highly increases lysine transfer activity.

It catalyses the reaction 7-cyano-7-carbaguanosine(15) in tRNA + L-lysine = 7-N-[(5S)-5-amino-5-carboxypentyl]formamidino-7-deazaguanosine(15) in tRNA. The protein operates within tRNA modification; archaeosine-tRNA biosynthesis. In terms of biological role, functions in the biosynthesis of archaeosine, a modified nucleoside present in the dihydrouridine loop (D-loop) of archaeal tRNAs. Catalyzes the addition of L-lysine to the cyano group of 7-cyano-7-deazaguanine (preQ0)-modified tRNAs at position 15, to generate q0kN15-tRNA, a q0N lysine adduct identified as 7-N-[(5S)-5-amino-5-carboxypentyl]formamidino-7-deazaguanosine. The polypeptide is Archaeosine synthase subunit alpha (Thermoplasma acidophilum (strain ATCC 25905 / DSM 1728 / JCM 9062 / NBRC 15155 / AMRC-C165)).